We begin with the raw amino-acid sequence, 342 residues long: Nuclear distribution protein nudE homolog 1 (342 aa).

Residues 45–189 (REYEAELETQ…ELAVQQKQEK (145 aa)) adopt a coiled-coil conformation. An interaction with PAFAH1B1 region spans residues 89-157 (EWYRQVSALE…ERNAFLESEL (69 aa)). Disordered stretches follow at residues 182–203 (AVQQ…TERT) and 320–342 (GTRP…KMLL). Positions 322-342 (RPSSTPGPMSHPSQSVVKMLL) are enriched in polar residues.

Belongs to the nudE family. In terms of assembly, self-associates. Interacts with PAFAH1B1. In terms of processing, phosphorylated in mitosis.

It localises to the cytoplasm. The protein resides in the cytoskeleton. Its subcellular location is the microtubule organizing center. The protein localises to the centrosome. It is found in the spindle. It localises to the chromosome. The protein resides in the centromere. Its subcellular location is the kinetochore. The protein localises to the cleavage furrow. It is found in the cytoplasmic vesicle membrane. Required for centrosome duplication and formation and function of the mitotic spindle. This chain is Nuclear distribution protein nudE homolog 1 (NDE1), found in Gallus gallus (Chicken).